A 309-amino-acid chain; its full sequence is MTLPFTLQQLRILKAIATEKSFTRAAEVLFVSQPSLSKQIKTLESRLNISLLNRENNIVSLTQAGKLFLEYSERILALCEESCRVLNDLKTGDRGNLIVGASQTIGTYLMPRVLALFAQNHPQINIEVHVDSTRKIAKRVLEGDIDIAVVGGNIPEEIEKNLKVEDFVNDELILIIPKSHPFALKKKKKINKDDLYHLNFITLNSNSTIRKLIDNILIQIAFEPKQFNIIMQLNSIEAIKTAVSLGLGAAFVSSSAIEKEIELKTIEIVTIEDIKITRILSIISNPECYRSKAVDLFYNELWTLKNTSN.

An HTH lysR-type domain is found at 5 to 62 (FTLQQLRILKAIATEKSFTRAAEVLFVSQPSLSKQIKTLESRLNISLLNRENNIVSLT). The segment at residues 22–41 (FTRAAEVLFVSQPSLSKQIK) is a DNA-binding region (H-T-H motif).

The protein belongs to the LysR transcriptional regulatory family.

It is found in the plastid. The protein resides in the chloroplast. In terms of biological role, trans-acting transcriptional regulator of RuBisCO genes (rbcL and rbcS) expression. The sequence is that of Probable RuBisCO transcriptional regulator (rbcR) from Trieres chinensis (Marine centric diatom).